Consider the following 727-residue polypeptide: Translation initiation factor IF-2, mitochondrial (727 aa).

A mitochondrion-targeting transit peptide spans 1–29 (MNRKILKLENLLRFHTICRQLHSLCQRRM). The tr-type G domain occupies 178 to 348 (PRSPVVTIMG…IALAEMLELK (171 aa)). The segment at 187–194 (GHVDHGKT) is G1. Residue 187-194 (GHVDHGKT) coordinates GTP. The segment at 212-216 (GITQH) is G2. GTP contacts are provided by residues 234 to 237 (DTPG) and 288 to 291 (NKCD). A G3 region spans residues 234-237 (DTPG). The interval 288 to 291 (NKCD) is G4. Positions 324–326 (SAL) are G5. Phosphothreonine is present on Thr688.

This sequence belongs to the TRAFAC class translation factor GTPase superfamily. Classic translation factor GTPase family. IF-2 subfamily. Monomer.

Its subcellular location is the mitochondrion. One of the essential components for the initiation of protein synthesis. Protects formylmethionyl-tRNA from spontaneous hydrolysis and promotes its binding to the 30S ribosomal subunits. Also involved in the hydrolysis of GTP during the formation of the 70S ribosomal complex. The protein is Translation initiation factor IF-2, mitochondrial (MTIF2) of Bos taurus (Bovine).